Here is a 238-residue protein sequence, read N- to C-terminus: Splicing regulator RBM11 (238 aa).

One can recognise an RRM domain in the interval 10-87; that stretch reads RTVFVGNLEA…RPINVQYRFG (78 aa). The tract at residues 172 to 238 is disordered; sequence ALNHSPGPEA…CRKCKKKKRY (67 aa). The Bipartite nuclear localization signal signature appears at 202-237; it reads NKRKRQRPDSDSDSSSEDKRGNEGSQKCRKCKKKKR. A compositionally biased stretch (basic residues) spans 228-238; that stretch reads KCRKCKKKKRY.

In terms of assembly, homodimer. As to expression, selectively expressed in brain, cerebellum and testis, and to a lower extent in kidney.

It is found in the nucleus. Its subcellular location is the nucleoplasm. The protein localises to the nucleus speckle. Tissue-specific splicing factor with potential implication in the regulation of alternative splicing during neuron and germ cell differentiation. Antagonizes SRSF1-mediated BCL-X splicing. May affect the choice of alternative 5' splice sites by binding to specific sequences in exons and antagonizing the SR protein SRSF1. This Mus musculus (Mouse) protein is Splicing regulator RBM11 (Rbm11).